A 279-amino-acid polypeptide reads, in one-letter code: 4-diphosphocytidyl-2-C-methyl-D-erythritol kinase (279 aa).

K11 is an active-site residue. Residue 95–105 (PVAAGLGGGSS) coordinates ATP. D137 is a catalytic residue.

This sequence belongs to the GHMP kinase family. IspE subfamily.

It carries out the reaction 4-CDP-2-C-methyl-D-erythritol + ATP = 4-CDP-2-C-methyl-D-erythritol 2-phosphate + ADP + H(+). It functions in the pathway isoprenoid biosynthesis; isopentenyl diphosphate biosynthesis via DXP pathway; isopentenyl diphosphate from 1-deoxy-D-xylulose 5-phosphate: step 3/6. In terms of biological role, catalyzes the phosphorylation of the position 2 hydroxy group of 4-diphosphocytidyl-2C-methyl-D-erythritol. In Geobacter sulfurreducens (strain ATCC 51573 / DSM 12127 / PCA), this protein is 4-diphosphocytidyl-2-C-methyl-D-erythritol kinase.